Here is a 144-residue protein sequence, read N- to C-terminus: UPF0102 protein BMA2801 (144 aa).

The segment at 1–28 (MCHAREASPGTGEPEAAPRDNFPRAAGS) is disordered.

This sequence belongs to the UPF0102 family.

This Burkholderia mallei (strain ATCC 23344) protein is UPF0102 protein BMA2801.